We begin with the raw amino-acid sequence, 405 residues long: Cystathionine gamma-lyase (405 aa).

Residues Arg62, Tyr114, and Arg119 each contribute to the substrate site. Lys212 is modified (N6-(pyridoxal phosphate)lysine). Glu339 contacts substrate.

Belongs to the trans-sulfuration enzymes family. In terms of assembly, homotetramer. Interacts with CALM in a calcium-dependent manner. Requires pyridoxal 5'-phosphate as cofactor.

Its subcellular location is the cytoplasm. The enzyme catalyses L,L-cystathionine + H2O = 2-oxobutanoate + L-cysteine + NH4(+). It functions in the pathway amino-acid biosynthesis; L-cysteine biosynthesis; L-cysteine from L-homocysteine and L-serine: step 2/2. Functionally, catalyzes the last step in the trans-sulfuration pathway from methionine to cysteine. Has broad substrate specificity. Converts cystathionine to cysteine, ammonia and 2-oxobutanoate. Converts two cysteine molecules to lanthionine and hydrogen sulfide. Can also accept homocysteine as substrate. Specificity depends on the levels of the endogenous substrates. Generates the endogenous signaling molecule hydrogen sulfide (H2S), and so contributes to the regulation of blood pressure. Acts as a cysteine-protein sulfhydrase by mediating sulfhydration of target proteins: sulfhydration consists of converting -SH groups into -SSH on specific cysteine residues of target proteins such as GAPDH, PTPN1 and NF-kappa-B subunit RELA, thereby regulating their function. This Bos taurus (Bovine) protein is Cystathionine gamma-lyase (CTH).